The primary structure comprises 94 residues: Lipolysis-activating peptide 1-beta chain (94 aa).

Residues 1-19 form the signal peptide; that stretch reads MKILAVVLISVIVLNTANG. The 68-residue stretch at 20–87 folds into the LCN-type CS-alpha/beta domain; sequence ENYYPQKYTN…FFNALESQCP (68 aa). 3 cysteine pairs are disulfide-bonded: cysteine 34–cysteine 56, cysteine 42–cysteine 66, and cysteine 46–cysteine 68.

It belongs to the long (3 C-C) scorpion toxin superfamily. In terms of assembly, homodimer; disulfide-linked or monomer (edited version) or heterodimer of an alpha chain (AC D9U299 or AC D9U2A4) and this beta chain (non-edited version). Expressed by the venom gland.

The protein resides in the secreted. Functionally, the homodimer inhibits HMG-CoA reductase (HMGCR) (32% of inhibition produced by 0.6 uM), a glycoprotein involved in the control of cholesterol biosynthesis. The inhibitory effects of bumarsin are seen at much lower concentrations (0.6 uM) than that for statins such as atorvastatin (5 mM) and simvastatin (10 uM). In addition to inhibition of HMG-CoA reductase, this protein lowers cholesterol levels by inducing steroid hormone synthesis via StAR, and by increasing reverse cholesterol transport mediated by the induction of ABCA1 and APOA1. Its function is as follows. The heterodimer non-edited LVP1 induces lipolysis in rat adipocytes. Induction of lipolysis by LVP1 appears to be mediated through the beta-2 adrenergic receptor pathway (ADRB2). The monomer edited version, similar to alpha-toxins, may modulate voltage-gated sodium channels (Nav) and may block voltage-gated potassium channels (Kv). The polypeptide is Lipolysis-activating peptide 1-beta chain (Lychas mucronatus (Chinese swimming scorpion)).